Here is a 128-residue protein sequence, read N- to C-terminus: 3-aminoacrylate deaminase RutC (128 aa).

This sequence belongs to the RutC family.

It carries out the reaction (Z)-3-aminoacrylate + H2O + H(+) = 3-oxopropanoate + NH4(+). In terms of biological role, involved in pyrimidine catabolism. Catalyzes the deamination of 3-aminoacrylate to malonic semialdehyde, a reaction that can also occur spontaneously. RutC may facilitate the reaction and modulate the metabolic fitness, rather than catalyzing essential functions. This Serratia proteamaculans (strain 568) protein is 3-aminoacrylate deaminase RutC.